The following is a 141-amino-acid chain: Nucleoside diphosphate kinase (141 aa).

ATP is bound by residues K11, F59, R87, T93, R104, and N114. The active-site Pros-phosphohistidine intermediate is the H117.

The protein belongs to the NDK family. As to quaternary structure, homotetramer. The cofactor is Mg(2+).

It is found in the cytoplasm. The catalysed reaction is a 2'-deoxyribonucleoside 5'-diphosphate + ATP = a 2'-deoxyribonucleoside 5'-triphosphate + ADP. The enzyme catalyses a ribonucleoside 5'-diphosphate + ATP = a ribonucleoside 5'-triphosphate + ADP. Functionally, major role in the synthesis of nucleoside triphosphates other than ATP. The ATP gamma phosphate is transferred to the NDP beta phosphate via a ping-pong mechanism, using a phosphorylated active-site intermediate. This is Nucleoside diphosphate kinase from Histophilus somni (strain 129Pt) (Haemophilus somnus).